A 569-amino-acid chain; its full sequence is Aspartate--tRNA ligase, cytoplasmic 2 (569 aa).

A disordered region spans residues 1–23 (MSEENNHKEKSKNEIKKEKKKIE). Positions 292-295 (QFYR) are aspartate. An L-aspartate-binding site is contributed by arginine 314. ATP-binding positions include 314-316 (RTD) and 322-324 (RHL). L-aspartate is bound by residues serine 475 and arginine 479. An ATP-binding site is contributed by 540–543 (GLER).

It belongs to the class-II aminoacyl-tRNA synthetase family. Type 2 subfamily.

The protein localises to the cytoplasm. The catalysed reaction is tRNA(Asp) + L-aspartate + ATP = L-aspartyl-tRNA(Asp) + AMP + diphosphate. This chain is Aspartate--tRNA ligase, cytoplasmic 2 (aspS2), found in Dictyostelium discoideum (Social amoeba).